The chain runs to 170 residues: Protein SprT (170 aa).

In terms of domain architecture, SprT-like spans 25–165; sequence SEQFFDRTFA…QYCKGRLEPV (141 aa). Zn(2+) is bound at residue His78. Residue Glu79 is part of the active site. Zn(2+) is bound at residue His82.

Belongs to the SprT family. Zn(2+) is required as a cofactor.

The protein localises to the cytoplasm. The chain is Protein SprT from Actinobacillus succinogenes (strain ATCC 55618 / DSM 22257 / CCUG 43843 / 130Z).